We begin with the raw amino-acid sequence, 387 residues long: Protein RecA (387 aa).

ATP is bound at residue 80–87; the sequence is GPESSGKT. Positions 348 to 387 are disordered; the sequence is LDDSEVAETEEETTASKTKAKAKKEEKAVETEEIELELED. Acidic residues-rich tracts occupy residues 349 to 360 and 378 to 387; these read DDSEVAETEEET and TEEIELELED.

It belongs to the RecA family.

Its subcellular location is the cytoplasm. Its function is as follows. Can catalyze the hydrolysis of ATP in the presence of single-stranded DNA, the ATP-dependent uptake of single-stranded DNA by duplex DNA, and the ATP-dependent hybridization of homologous single-stranded DNAs. It interacts with LexA causing its activation and leading to its autocatalytic cleavage. This is Protein RecA from Lactococcus lactis subsp. cremoris (strain MG1363).